The sequence spans 563 residues: Calmodulin-binding protein 60 G (563 aa).

The tract at residues 1-76 (MKIRNSPSFH…SSCVSMERSR (76 aa)) is calmodulin-binding. Residues 147–263 (ESWTVEGFNR…VSATRLAERK (117 aa)) are DNA-binding.

The protein belongs to the plant ACBP60 protein family. As to quaternary structure, interacts with calmodulin (CaM) in the presence of calcium ions; this interaction is required for defense responses. In terms of assembly, (Microbial infection) Interacts with V.dahliae SCP41; the interaction is direct and inhibits CBP60G. Expressed in seedlings, roots, leaves, inflorescences and flowers, and, to a lower extent, in siliques. Particularly present in guard cells.

The protein localises to the nucleus. In terms of biological role, transcription activator that binds DNA in a sequence-specific manner, 5'-GAAATTTTGG-3', to promote the expression of target genes. Recruited to the promoter of ICS1 and other defense-related genes (e.g. PR1, PR2 and EDS5) in response to both biotic (e.g. Pseudomonas syringae pv. maculicola ES4326, P.syringae pv. tomato DC3000, and microbe-associated molecular patterns (MAMPs) such as flg22) and abiotic stresses (e.g. UV-B, drought and abscisic acid), thus triggering rapid defense responses by stimulating salicylic acid (SA) biosynthesis. Involved in basal and systemic acquired resistance to P.syringae and Hyaloperonospora arabidopsidis. Mediates resistance to drought and sensitivity to abscisic acid (ABA), especially for ABA-mediated signaling process that regulates early seedling growth. This chain is Calmodulin-binding protein 60 G, found in Arabidopsis thaliana (Mouse-ear cress).